We begin with the raw amino-acid sequence, 36 residues long: Pollen allergen Dac g 2 (36 aa).

This sequence belongs to the expansin family. Expansin B subfamily.

The protein localises to the secreted. This Dactylis glomerata (Orchard grass) protein is Pollen allergen Dac g 2.